Here is a 240-residue protein sequence, read N- to C-terminus: Probable septum site-determining protein MinC (240 aa).

The protein belongs to the MinC family. Interacts with MinD and FtsZ.

Its function is as follows. Cell division inhibitor that blocks the formation of polar Z ring septums. Rapidly oscillates between the poles of the cell to destabilize FtsZ filaments that have formed before they mature into polar Z rings. Prevents FtsZ polymerization. This Aeromonas hydrophila subsp. hydrophila (strain ATCC 7966 / DSM 30187 / BCRC 13018 / CCUG 14551 / JCM 1027 / KCTC 2358 / NCIMB 9240 / NCTC 8049) protein is Probable septum site-determining protein MinC.